Here is a 2037-residue protein sequence, read N- to C-terminus: Protein SWOLLEN 1 (2037 aa).

11 disordered regions span residues Val-141 to Asp-179, Arg-454 to Asp-487, Ser-504 to Ser-531, Lys-567 to Val-637, Ser-686 to Ala-705, Val-837 to Lys-893, Ala-1011 to Pro-1045, Lys-1148 to Pro-1197, Ser-1729 to Arg-1748, Lys-1793 to Gln-1812, and Glu-1841 to Lys-2037. The segment covering Ser-147–Thr-157 has biased composition (basic and acidic residues). Positions Val-158–Val-176 are enriched in polar residues. Residues Arg-454–Gly-466 show a composition bias toward basic and acidic residues. Residues Ser-504–Ser-514 show a composition bias toward low complexity. Positions Glu-515–Ile-526 are enriched in polar residues. A compositionally biased stretch (low complexity) spans Ser-841–Ser-852. Positions Ser-853–Ser-865 are enriched in basic residues. Polar residues-rich tracts occupy residues Glu-1025 to Asn-1041 and Gln-1151 to Val-1171. Basic residues predominate over residues Thr-1179–Met-1189. Residues Ser-1794 to Arg-1805 show a composition bias toward basic and acidic residues. Composition is skewed to polar residues over residues Lys-1874 to Arg-1886, Glu-1942 to Lys-1964, and Leu-2013 to Pro-2023. Residues Ser-2028–Lys-2037 show a composition bias toward basic residues.

In terms of assembly, interacts with importin alpha IMPA1 and IMPA2, required for nuclear-localized proteins import. In terms of tissue distribution, mainly expressed in seedlings, flower buds and stems, and, to a lower extent, in leaves and siliques.

The protein resides in the nucleus. Its function is as follows. Under salt stress, appears to prevent the accumulation of reactive oxygen species (ROS) in roots and required for the maintenance of cell wall integrity (cellulose, pectin and lignin composition) by interacting with importin alpha (e.g. IMPA1 and IMPA2) and binding to the promoter of several ROS- and cell wall-related genes to regulate their expression. Necessary for cells organization in meristems and root elongation zones as well as for root elongation in high salinity, but not upon osmotic stress. The sequence is that of Protein SWOLLEN 1 from Arabidopsis thaliana (Mouse-ear cress).